The sequence spans 240 residues: Large ribosomal subunit protein bL25 (240 aa).

2 disordered regions span residues 1–23 (MATVKELKATARPAGGKGAARAE) and 207–240 (PAAAPAAGAKAPAAGAKAPAAGAKAPAAPAAKKK).

This sequence belongs to the bacterial ribosomal protein bL25 family. CTC subfamily. As to quaternary structure, part of the 50S ribosomal subunit; part of the 5S rRNA/L5/L18/L25 subcomplex. Contacts the 5S rRNA. Binds to the 5S rRNA independently of L5 and L18.

This is one of the proteins that binds to the 5S RNA in the ribosome where it forms part of the central protuberance. This is Large ribosomal subunit protein bL25 from Rhodopseudomonas palustris (strain BisB18).